Here is a 156-residue protein sequence, read N- to C-terminus: Small ribosomal subunit protein uS7 (156 aa).

It belongs to the universal ribosomal protein uS7 family. In terms of assembly, part of the 30S ribosomal subunit. Contacts proteins S9 and S11.

In terms of biological role, one of the primary rRNA binding proteins, it binds directly to 16S rRNA where it nucleates assembly of the head domain of the 30S subunit. Is located at the subunit interface close to the decoding center, probably blocks exit of the E-site tRNA. This chain is Small ribosomal subunit protein uS7, found in Synechococcus sp. (strain CC9311).